Consider the following 373-residue polypeptide: Glutamate 5-kinase (373 aa).

Lys-15 is an ATP binding site. Substrate is bound by residues Ser-54, Asp-141, and Asn-153. ATP-binding positions include 173 to 174 and 215 to 221; these read SD and TGGMATK. The PUA domain maps to 280 to 358; that stretch reads RGKLLVDEGA…SEIEVVLGYK (79 aa).

This sequence belongs to the glutamate 5-kinase family.

It is found in the cytoplasm. The enzyme catalyses L-glutamate + ATP = L-glutamyl 5-phosphate + ADP. The protein operates within amino-acid biosynthesis; L-proline biosynthesis; L-glutamate 5-semialdehyde from L-glutamate: step 1/2. Catalyzes the transfer of a phosphate group to glutamate to form L-glutamate 5-phosphate. The sequence is that of Glutamate 5-kinase from Syntrophotalea carbinolica (strain DSM 2380 / NBRC 103641 / GraBd1) (Pelobacter carbinolicus).